Here is a 180-residue protein sequence, read N- to C-terminus: ATP-dependent protease subunit HslV (180 aa).

Residue threonine 5 is part of the active site. Na(+)-binding residues include glycine 165, cysteine 168, and threonine 171.

This sequence belongs to the peptidase T1B family. HslV subfamily. In terms of assembly, a double ring-shaped homohexamer of HslV is capped on each side by a ring-shaped HslU homohexamer. The assembly of the HslU/HslV complex is dependent on binding of ATP.

It localises to the cytoplasm. The enzyme catalyses ATP-dependent cleavage of peptide bonds with broad specificity.. Allosterically activated by HslU binding. Functionally, protease subunit of a proteasome-like degradation complex believed to be a general protein degrading machinery. The polypeptide is ATP-dependent protease subunit HslV (Helicobacter pylori (strain HPAG1)).